Here is an 82-residue protein sequence, read N- to C-terminus: Small ribosomal subunit protein uS17 (82 aa).

Belongs to the universal ribosomal protein uS17 family. Part of the 30S ribosomal subunit.

In terms of biological role, one of the primary rRNA binding proteins, it binds specifically to the 5'-end of 16S ribosomal RNA. The polypeptide is Small ribosomal subunit protein uS17 (Rickettsia rickettsii (strain Iowa)).